We begin with the raw amino-acid sequence, 193 residues long: Putative manganese efflux pump MntP (193 aa).

Helical transmembrane passes span 6 to 26 (LLGLAVALAMDAFAVAIAVGI), 41 to 61 (YHFGLFQALMPIIGWALGTGI), 65 to 85 (TQSYAHWIAFTLLALVGANMI), 107 to 127 (LIILSLATSIDALAVGLSLSM), 132 to 152 (IWYPALIIGLVAGAFTLFGML), and 169 to 189 (VLGGIILWAIGLNILYDNGVF).

This sequence belongs to the MntP (TC 9.B.29) family.

Its subcellular location is the cell inner membrane. Functionally, probably functions as a manganese efflux pump. The sequence is that of Putative manganese efflux pump MntP from Desulfotalea psychrophila (strain LSv54 / DSM 12343).